The following is a 291-amino-acid chain: Formamidopyrimidine-DNA glycosylase (291 aa).

Proline 2 (schiff-base intermediate with DNA) is an active-site residue. Residue glutamate 3 is the Proton donor of the active site. Catalysis depends on lysine 58, which acts as the Proton donor; for beta-elimination activity. Positions 100, 123, and 166 each coordinate DNA. Residues 257–291 (SVYGREGKECFQCGIPITRISQSGRSSFYCSQCQK) form an FPG-type zinc finger. Arginine 281 functions as the Proton donor; for delta-elimination activity in the catalytic mechanism.

This sequence belongs to the FPG family. In terms of assembly, monomer. Zn(2+) is required as a cofactor.

The enzyme catalyses Hydrolysis of DNA containing ring-opened 7-methylguanine residues, releasing 2,6-diamino-4-hydroxy-5-(N-methyl)formamidopyrimidine.. It catalyses the reaction 2'-deoxyribonucleotide-(2'-deoxyribose 5'-phosphate)-2'-deoxyribonucleotide-DNA = a 3'-end 2'-deoxyribonucleotide-(2,3-dehydro-2,3-deoxyribose 5'-phosphate)-DNA + a 5'-end 5'-phospho-2'-deoxyribonucleoside-DNA + H(+). Its function is as follows. Involved in base excision repair of DNA damaged by oxidation or by mutagenic agents. Acts as a DNA glycosylase that recognizes and removes damaged bases. Has a preference for oxidized purines, such as 7,8-dihydro-8-oxoguanine (8-oxoG). Has AP (apurinic/apyrimidinic) lyase activity and introduces nicks in the DNA strand. Cleaves the DNA backbone by beta-delta elimination to generate a single-strand break at the site of the removed base with both 3'- and 5'-phosphates. This Bartonella quintana (strain Toulouse) (Rochalimaea quintana) protein is Formamidopyrimidine-DNA glycosylase.